We begin with the raw amino-acid sequence, 231 residues long: Octanoyl-[acyl-carrier-protein]:protein N-octanoyltransferase LIPT2, mitochondrial (231 aa).

One can recognise a BPL/LPL catalytic domain in the interval 41-224 (GTKAGVLLVC…AFKETFKCTL (184 aa)). Position 43 is an N6-succinyllysine (Lys-43). Substrate is bound by residues 85 to 92 (RGGLATFH), 154 to 156 (AIG), and 167 to 169 (GLA). The Acyl-thioester intermediate role is filled by Cys-185.

This sequence belongs to the LipB family.

The protein resides in the mitochondrion. It catalyses the reaction octanoyl-[ACP] + L-lysyl-[protein] = N(6)-octanoyl-L-lysyl-[protein] + holo-[ACP] + H(+). Its pathway is protein modification; protein lipoylation via endogenous pathway; protein N(6)-(lipoyl)lysine from octanoyl-[acyl-carrier-protein]: step 1/2. In terms of biological role, catalyzes the transfer of endogenously produced octanoic acid from octanoyl-acyl-carrier-protein onto the lipoyl domains of lipoate-dependent enzymes such as the protein H of the glycine cleavage system (GCSH). Lipoyl-ACP can also act as a substrate although octanoyl-ACP is likely to be the physiological substrate. This is Octanoyl-[acyl-carrier-protein]:protein N-octanoyltransferase LIPT2, mitochondrial from Mus musculus (Mouse).